We begin with the raw amino-acid sequence, 292 residues long: Malonyl-[acyl-carrier protein] O-methyltransferase (292 aa).

It belongs to the methyltransferase superfamily.

It catalyses the reaction malonyl-[ACP] + S-adenosyl-L-methionine = malonyl-[ACP] methyl ester + S-adenosyl-L-homocysteine. It functions in the pathway cofactor biosynthesis; biotin biosynthesis. Its function is as follows. Converts the free carboxyl group of a malonyl-thioester to its methyl ester by transfer of a methyl group from S-adenosyl-L-methionine (SAM). It allows to synthesize pimeloyl-ACP via the fatty acid synthetic pathway. The chain is Malonyl-[acyl-carrier protein] O-methyltransferase from Alcanivorax borkumensis (strain ATCC 700651 / DSM 11573 / NCIMB 13689 / SK2).